Reading from the N-terminus, the 1124-residue chain is Putative DNA mismatch repair protein mutS homolog L359 (1124 aa).

779–786 (SNNWAGKS) is a binding site for ATP.

It belongs to the DNA mismatch repair MutS family.

Its function is as follows. May be involved in DNA-mismatch repair. This is Putative DNA mismatch repair protein mutS homolog L359 from Acanthamoeba polyphaga (Amoeba).